A 78-amino-acid polypeptide reads, in one-letter code: Sec-independent protein translocase protein TatA (78 aa).

Residues 1-21 traverse the membrane as a helical segment; that stretch reads MGMPSMPELLIILLIVVLLFG. The segment at 46–78 is disordered; that stretch reads DEEEVATENKKEIEEKTTASTTKTTADQDTTKA. A compositionally biased stretch (basic and acidic residues) spans 52 to 62; the sequence is TENKKEIEEKT. A compositionally biased stretch (low complexity) spans 63–78; that stretch reads TASTTKTTADQDTTKA.

The protein belongs to the TatA/E family. The Tat system comprises two distinct complexes: a TatABC complex, containing multiple copies of TatA, TatB and TatC subunits, and a separate TatA complex, containing only TatA subunits. Substrates initially bind to the TatABC complex, which probably triggers association of the separate TatA complex to form the active translocon.

The protein resides in the cell inner membrane. Its function is as follows. Part of the twin-arginine translocation (Tat) system that transports large folded proteins containing a characteristic twin-arginine motif in their signal peptide across membranes. TatA could form the protein-conducting channel of the Tat system. The sequence is that of Sec-independent protein translocase protein TatA from Nitratiruptor sp. (strain SB155-2).